The chain runs to 213 residues: Kynurenine formamidase (213 aa).

W18 serves as a coordination point for substrate. The Zn(2+) site is built by H48, H52, and D54. Catalysis depends on H58, which acts as the Proton donor/acceptor. Positions 160 and 172 each coordinate Zn(2+).

It belongs to the Cyclase 1 superfamily. KynB family. Homodimer. Zn(2+) is required as a cofactor.

It carries out the reaction N-formyl-L-kynurenine + H2O = L-kynurenine + formate + H(+). It participates in amino-acid degradation; L-tryptophan degradation via kynurenine pathway; L-kynurenine from L-tryptophan: step 2/2. Functionally, catalyzes the hydrolysis of N-formyl-L-kynurenine to L-kynurenine, the second step in the kynurenine pathway of tryptophan degradation. The chain is Kynurenine formamidase from Burkholderia cenocepacia (strain ATCC BAA-245 / DSM 16553 / LMG 16656 / NCTC 13227 / J2315 / CF5610) (Burkholderia cepacia (strain J2315)).